We begin with the raw amino-acid sequence, 517 residues long: 2,3-bisphosphoglycerate-independent phosphoglycerate mutase (517 aa).

Residues D12 and S62 each coordinate Mn(2+). S62 acts as the Phosphoserine intermediate in catalysis. Residues H123, 153 to 154 (RD), R185, R191, 261 to 264 (RSDR), and K336 each bind substrate. Positions 403, 407, 444, 445, and 463 each coordinate Mn(2+).

The protein belongs to the BPG-independent phosphoglycerate mutase family. Monomer. Requires Mn(2+) as cofactor.

It carries out the reaction (2R)-2-phosphoglycerate = (2R)-3-phosphoglycerate. It functions in the pathway carbohydrate degradation; glycolysis; pyruvate from D-glyceraldehyde 3-phosphate: step 3/5. In terms of biological role, catalyzes the interconversion of 2-phosphoglycerate and 3-phosphoglycerate. The polypeptide is 2,3-bisphosphoglycerate-independent phosphoglycerate mutase (Methylobacillus flagellatus (strain ATCC 51484 / DSM 6875 / VKM B-1610 / KT)).